An 88-amino-acid chain; its full sequence is Putative membrane protein insertion efficiency factor (88 aa).

The segment at 68–88 (VPPPNSDTRARGEADARSHRL) is disordered. Basic and acidic residues predominate over residues 75–88 (TRARGEADARSHRL).

Belongs to the UPF0161 family.

Its subcellular location is the cell inner membrane. In terms of biological role, could be involved in insertion of integral membrane proteins into the membrane. The sequence is that of Putative membrane protein insertion efficiency factor from Burkholderia orbicola (strain MC0-3).